We begin with the raw amino-acid sequence, 160 residues long: Cytochrome b6-f complex subunit 4 (160 aa).

3 helical membrane passes run 36–56 (LLYI…GLAV), 95–115 (LLGV…PFPE), and 131–151 (TVFS…ALPI).

It belongs to the cytochrome b family. PetD subfamily. In terms of assembly, the 4 large subunits of the cytochrome b6-f complex are cytochrome b6, subunit IV (17 kDa polypeptide, petD), cytochrome f and the Rieske protein, while the 4 small subunits are petG, petL, petM and petN. The complex functions as a dimer.

It localises to the plastid. It is found in the chloroplast thylakoid membrane. Functionally, component of the cytochrome b6-f complex, which mediates electron transfer between photosystem II (PSII) and photosystem I (PSI), cyclic electron flow around PSI, and state transitions. The chain is Cytochrome b6-f complex subunit 4 from Huperzia lucidula (Shining clubmoss).